We begin with the raw amino-acid sequence, 266 residues long: Large ribosomal subunit protein uL2c (266 aa).

The tract at residues 1-24 (MAIHLYKTSTPSTRNGTVDSQVKS) is disordered. The segment covering 7–24 (KTSTPSTRNGTVDSQVKS) has biased composition (polar residues).

The protein belongs to the universal ribosomal protein uL2 family. In terms of assembly, part of the 50S ribosomal subunit.

Its subcellular location is the plastid. The protein resides in the chloroplast. This Nicotiana debneyi (Debney's tobacco) protein is Large ribosomal subunit protein uL2c (rpl2).